The chain runs to 212 residues: Large ribosomal subunit protein uL4 (212 aa).

The protein belongs to the universal ribosomal protein uL4 family. In terms of assembly, part of the 50S ribosomal subunit.

Functionally, one of the primary rRNA binding proteins, this protein initially binds near the 5'-end of the 23S rRNA. It is important during the early stages of 50S assembly. It makes multiple contacts with different domains of the 23S rRNA in the assembled 50S subunit and ribosome. In terms of biological role, forms part of the polypeptide exit tunnel. The chain is Large ribosomal subunit protein uL4 from Caulobacter vibrioides (strain ATCC 19089 / CIP 103742 / CB 15) (Caulobacter crescentus).